Consider the following 523-residue polypeptide: DNA primase (523 aa).

A CHC2-type zinc finger spans residues 37 to 61 (CPFHAEKTPSFFVNPLQGYFYCFGC). Residues 259 to 340 (KSVILVEGYI…NVSVVRMDFG (82 aa)) enclose the Toprim domain. Mg(2+)-binding residues include glutamate 265, aspartate 309, and aspartate 311.

This sequence belongs to the DnaG primase family. As to quaternary structure, monomer. Interacts with DnaB. Zn(2+) serves as cofactor. Requires Mg(2+) as cofactor.

It carries out the reaction ssDNA + n NTP = ssDNA/pppN(pN)n-1 hybrid + (n-1) diphosphate.. In terms of biological role, RNA polymerase that catalyzes the synthesis of short RNA molecules used as primers for DNA polymerase during DNA replication. This Borreliella burgdorferi (strain ATCC 35210 / DSM 4680 / CIP 102532 / B31) (Borrelia burgdorferi) protein is DNA primase.